Consider the following 444-residue polypeptide: ATP-dependent protease ATPase subunit HslU (444 aa).

Residues Ile-18 and 60-65 (GVGKTE) contribute to the ATP site. Residues 143–163 (WGEVESHDSHSSTRQAFRKKL) form a disordered region. ATP-binding residues include Asp-257, Glu-322, and Arg-394.

The protein belongs to the ClpX chaperone family. HslU subfamily. A double ring-shaped homohexamer of HslV is capped on each side by a ring-shaped HslU homohexamer. The assembly of the HslU/HslV complex is dependent on binding of ATP.

Its subcellular location is the cytoplasm. In terms of biological role, ATPase subunit of a proteasome-like degradation complex; this subunit has chaperone activity. The binding of ATP and its subsequent hydrolysis by HslU are essential for unfolding of protein substrates subsequently hydrolyzed by HslV. HslU recognizes the N-terminal part of its protein substrates and unfolds these before they are guided to HslV for hydrolysis. The protein is ATP-dependent protease ATPase subunit HslU of Haemophilus influenzae (strain PittEE).